The following is a 419-amino-acid chain: UDP-N-acetylglucosamine 1-carboxyvinyltransferase (419 aa).

22-23 contributes to the phosphoenolpyruvate binding site; sequence KN. R95 provides a ligand contact to UDP-N-acetyl-alpha-D-glucosamine. Residue C119 is the Proton donor of the active site. The residue at position 119 (C119) is a 2-(S-cysteinyl)pyruvic acid O-phosphothioketal. Residues 164 to 167, D308, and I330 each bind UDP-N-acetyl-alpha-D-glucosamine; that span reads KVSV.

Belongs to the EPSP synthase family. MurA subfamily.

The protein localises to the cytoplasm. It carries out the reaction phosphoenolpyruvate + UDP-N-acetyl-alpha-D-glucosamine = UDP-N-acetyl-3-O-(1-carboxyvinyl)-alpha-D-glucosamine + phosphate. The protein operates within cell wall biogenesis; peptidoglycan biosynthesis. Its function is as follows. Cell wall formation. Adds enolpyruvyl to UDP-N-acetylglucosamine. This Rickettsia akari (strain Hartford) protein is UDP-N-acetylglucosamine 1-carboxyvinyltransferase.